A 316-amino-acid chain; its full sequence is Probable cell division protein WhiA (316 aa).

A DNA-binding region (H-T-H motif) is located at residues 276-309 (SLEELGKIAEPQITKDAIAGRIRRLLQLAEKTEK).

Belongs to the WhiA family.

Its function is as follows. Involved in cell division and chromosome segregation. This chain is Probable cell division protein WhiA, found in Bifidobacterium longum (strain NCC 2705).